A 66-amino-acid polypeptide reads, in one-letter code: MAFLKKSLFLVLFLGLVSLSICEEEKRETEEEEHDQEEDDKSEEKRFLSMIPHIVSGVAALAKHLG.

Positions 1 to 22 (MAFLKKSLFLVLFLGLVSLSIC) are cleaved as a signal peptide. Positions 23–46 (EEEKRETEEEEHDQEEDDKSEEKR) are excised as a propeptide. The segment at 25–44 (EKRETEEEEHDQEEDDKSEE) is disordered. Over residues 30-41 (EEEEHDQEEDDK) the composition is skewed to acidic residues. At Leu65 the chain carries Leucine amide.

Expressed by the skin glands.

The protein localises to the secreted. It localises to the target cell membrane. Functionally, antimicrobial peptide with high activity against Gram-positive bacteria, moderate activity against Gram-negative bacteria, and moderate activity against fungi. Acts by causing bacterial membrane disruption inducing leakage of the intracellular content followed by cell death. It adopts an alpha-helical amphipathic structure in membrane environments. Also shows highly potent antiparasitic activity against Leishmania species. Shows moderate hemolytic activity on human erythrocytes (LC(50)=33 uM). Is also active on human monocytes (IC(50)=23 uM). The sequence is that of Phylloseptin-S4 from Phyllomedusa sauvagei (Sauvage's leaf frog).